The sequence spans 253 residues: Discoidin-1 subunit B/C (253 aa).

Ser-2 carries the post-translational modification N-acetylserine. Positions 2–152 (STQGLVQLIS…ISLRCEFYTQ (151 aa)) constitute an F5/8 type C domain. Residues 79–81 (RGD) carry the Cell attachment site motif.

As to quaternary structure, tetramer of four different chains (A to D). As to expression, stalk cells.

It is found in the cytoplasm. Its function is as follows. Galactose- and N-acetylgalactosamine-binding lectin. May play a role in cell-substratum adhesion rather than in cell-cell adhesion. May be necessary for the maintenance of normal elongate morphology during aggregation. The chain is Discoidin-1 subunit B/C (dscC-1) from Dictyostelium discoideum (Social amoeba).